We begin with the raw amino-acid sequence, 439 residues long: Ribosomal protein uS12 methylthiotransferase RimO (439 aa).

Residues 5–117 (KKLHLISLGC…IDELIASKQS (113 aa)) form the MTTase N-terminal domain. The [4Fe-4S] cluster site is built by cysteine 14, cysteine 48, cysteine 80, cysteine 149, cysteine 153, and cysteine 156. One can recognise a Radical SAM core domain in the interval 135–363 (TGSNYHAYIK…GEIAERSTLR (229 aa)). The region spanning 366–437 (EKMVGKTVEL…GMQLLATLIK (72 aa)) is the TRAM domain.

The protein belongs to the methylthiotransferase family. RimO subfamily. It depends on [4Fe-4S] cluster as a cofactor.

The protein localises to the cytoplasm. The catalysed reaction is L-aspartate(89)-[ribosomal protein uS12]-hydrogen + (sulfur carrier)-SH + AH2 + 2 S-adenosyl-L-methionine = 3-methylsulfanyl-L-aspartate(89)-[ribosomal protein uS12]-hydrogen + (sulfur carrier)-H + 5'-deoxyadenosine + L-methionine + A + S-adenosyl-L-homocysteine + 2 H(+). In terms of biological role, catalyzes the methylthiolation of an aspartic acid residue of ribosomal protein uS12. The sequence is that of Ribosomal protein uS12 methylthiotransferase RimO from Sulfurovum sp. (strain NBC37-1).